The sequence spans 957 residues: Exoribonuclease II, mitochondrial (957 aa).

Residues 1–54 (MNYRQLFLLQNVNLESNYLLKRVCLSLKLSPCKLTRKFHHACPSSSKVLKYFRI) constitute a mitochondrion transit peptide. Residues 503–843 (RVDLRHLKAF…FTHHQIQSVL (341 aa)) form the RNB domain.

It belongs to the RNR ribonuclease family.

Its subcellular location is the mitochondrion. It catalyses the reaction Exonucleolytic cleavage in the 3'- to 5'-direction to yield nucleoside 5'-phosphates.. Required for intron-independent turnover and processing of mitochondrial RNA. Participates in 3'-mtRNA processing where it hydrolyzes single-stranded RNA or partially double-stranded RNA with 3'-single-stranded tails. This is Exoribonuclease II, mitochondrial (rpm1) from Schizosaccharomyces pombe (strain 972 / ATCC 24843) (Fission yeast).